The chain runs to 984 residues: Putative formate dehydrogenase SAR2393 (984 aa).

Residues 3–79 (EHLVVTLDGK…PMTVNTVNND (77 aa)) enclose the 2Fe-2S ferredoxin-type domain. [2Fe-2S] cluster-binding residues include cysteine 37, cysteine 48, cysteine 51, and cysteine 63. The region spanning 79–119 (DVKDAQKEALDRILEKHMLYCTVCDYNNGDCEIHNTMDAWG) is the 4Fe-4S His(Cys)3-ligated-type domain. [4Fe-4S] cluster-binding residues include histidine 95, cysteine 99, cysteine 102, cysteine 109, cysteine 147, cysteine 150, cysteine 153, cysteine 157, cysteine 190, cysteine 193, cysteine 196, cysteine 200, cysteine 264, cysteine 267, cysteine 271, and cysteine 299. 4Fe-4S ferredoxin-type domains are found at residues 138–165 (PFYR…LNET) and 181–211 (NDVP…VNME). A formate dehydrogenase region spans residues 252-984 (MRKERIKKTK…YVFPGNQVDK (733 aa)). Residues 257–313 (IKKTKTVCTYCGVGCSFEVWTKDREILKVQPSHDSPANKIATCVKGKFSWGHINSDQ) enclose the 4Fe-4S Mo/W bis-MGD-type domain.

The protein in the C-terminal section; belongs to the prokaryotic molybdopterin-containing oxidoreductase family. The cofactor is [2Fe-2S] cluster. Requires [4Fe-4S] cluster as cofactor. Mo-bis(molybdopterin guanine dinucleotide) is required as a cofactor.

The enzyme catalyses formate + NAD(+) = CO2 + NADH. The protein is Putative formate dehydrogenase SAR2393 of Staphylococcus aureus (strain MRSA252).